Reading from the N-terminus, the 363-residue chain is Histidinol-phosphate aminotransferase (363 aa).

K220 carries the N6-(pyridoxal phosphate)lysine modification.

It belongs to the class-II pyridoxal-phosphate-dependent aminotransferase family. Histidinol-phosphate aminotransferase subfamily. As to quaternary structure, homodimer. Pyridoxal 5'-phosphate serves as cofactor.

It catalyses the reaction L-histidinol phosphate + 2-oxoglutarate = 3-(imidazol-4-yl)-2-oxopropyl phosphate + L-glutamate. Its pathway is amino-acid biosynthesis; L-histidine biosynthesis; L-histidine from 5-phospho-alpha-D-ribose 1-diphosphate: step 7/9. The polypeptide is Histidinol-phosphate aminotransferase (Paramagnetospirillum magneticum (strain ATCC 700264 / AMB-1) (Magnetospirillum magneticum)).